A 158-amino-acid chain; its full sequence is Transcriptional repressor NrdR (158 aa).

Residues 1-22 (MRCPFCGSDDTQVKDSRPAEDN) are disordered. A zinc finger spans residues 3–34 (CPFCGSDDTQVKDSRPAEDNSAIRRRRICPDC). The span at 11–22 (TQVKDSRPAEDN) shows a compositional bias: basic and acidic residues. Residues 49-139 (LTVLKKTGRK…VYRDFSHAED (91 aa)) form the ATP-cone domain.

This sequence belongs to the NrdR family. The cofactor is Zn(2+).

Its function is as follows. Negatively regulates transcription of bacterial ribonucleotide reductase nrd genes and operons by binding to NrdR-boxes. This chain is Transcriptional repressor NrdR, found in Allorhizobium ampelinum (strain ATCC BAA-846 / DSM 112012 / S4) (Agrobacterium vitis (strain S4)).